A 421-amino-acid polypeptide reads, in one-letter code: Nuclear speckle RNA-binding protein B (421 aa).

Disordered stretches follow at residues 1–64, 86–114, and 197–226; these read MDNR…VNIY, TGQT…MVDT, and TDPQ…GIPH. Residues 33–44 are compositionally biased toward pro residues; sequence PLAPPHPQPQPP. The span at 89-103 shows a compositional bias: low complexity; sequence TSTSTTSSSSSSSTS. Residues 323–409 form the RRM domain; that stretch reads NTLYVEGLPS…KILRLQFFRN (87 aa).

As to expression, isoform 1: Expressed in root meristems, lateral root primordia, root vascular tissues and cotyledon vascular tissues. Isoform 2: Expressed in root meristems, lateral root primordia and root vascular tissues.

It is found in the nucleus speckle. Its function is as follows. Alternative splicing (AS) regulator that binds to specific mRNAs and modulates auxin effects on the transcriptome. Displaced from its targets upon binding to AS competitor long non-coding RNA (ASCO-RNA). In Arabidopsis thaliana (Mouse-ear cress), this protein is Nuclear speckle RNA-binding protein B.